The following is a 258-amino-acid chain: Imidazole glycerol phosphate synthase subunit HisF (258 aa).

Residues Asp11 and Asp130 contribute to the active site.

It belongs to the HisA/HisF family. Heterodimer of HisH and HisF.

The protein resides in the cytoplasm. It catalyses the reaction 5-[(5-phospho-1-deoxy-D-ribulos-1-ylimino)methylamino]-1-(5-phospho-beta-D-ribosyl)imidazole-4-carboxamide + L-glutamine = D-erythro-1-(imidazol-4-yl)glycerol 3-phosphate + 5-amino-1-(5-phospho-beta-D-ribosyl)imidazole-4-carboxamide + L-glutamate + H(+). It participates in amino-acid biosynthesis; L-histidine biosynthesis; L-histidine from 5-phospho-alpha-D-ribose 1-diphosphate: step 5/9. IGPS catalyzes the conversion of PRFAR and glutamine to IGP, AICAR and glutamate. The HisF subunit catalyzes the cyclization activity that produces IGP and AICAR from PRFAR using the ammonia provided by the HisH subunit. This chain is Imidazole glycerol phosphate synthase subunit HisF, found in Prochlorococcus marinus (strain MIT 9211).